Reading from the N-terminus, the 508-residue chain is Photosystem II CP47 reaction center protein (508 aa).

Transmembrane regions (helical) follow at residues S21–S36, I101–W115, G140–F156, I203–S218, V237–V252, and S457–R472.

It belongs to the PsbB/PsbC family. PsbB subfamily. As to quaternary structure, PSII is composed of 1 copy each of membrane proteins PsbA, PsbB, PsbC, PsbD, PsbE, PsbF, PsbH, PsbI, PsbJ, PsbK, PsbL, PsbM, PsbT, PsbX, PsbY, PsbZ, Psb30/Ycf12, at least 3 peripheral proteins of the oxygen-evolving complex and a large number of cofactors. It forms dimeric complexes. Binds multiple chlorophylls. PSII binds additional chlorophylls, carotenoids and specific lipids. is required as a cofactor.

The protein resides in the plastid. The protein localises to the chloroplast thylakoid membrane. Its function is as follows. One of the components of the core complex of photosystem II (PSII). It binds chlorophyll and helps catalyze the primary light-induced photochemical processes of PSII. PSII is a light-driven water:plastoquinone oxidoreductase, using light energy to abstract electrons from H(2)O, generating O(2) and a proton gradient subsequently used for ATP formation. This is Photosystem II CP47 reaction center protein from Ipomoea purpurea (Common morning glory).